The chain runs to 68 residues: Small integral membrane protein 45 (68 aa).

Residues 7–27 form a helical membrane-spanning segment; that stretch reads WFVPVYLVISVLILVGFGACI.

As to expression, highly expressed in brain.

It localises to the nucleus. The protein resides in the cytoplasm. The protein localises to the membrane. Its function is as follows. Plays a role in the regulation of neuron maturation. The protein is Small integral membrane protein 45 of Homo sapiens (Human).